A 348-amino-acid polypeptide reads, in one-letter code: D-alanine--D-alanine ligase (348 aa).

The ATP-grasp domain maps to 132 to 334 (KQVLATVGVP…YSDLIEKLVM (203 aa)). 162 to 217 (LETLSFPIFVKPANMGSSVGISKATDESSLRSAIDLALKYDSRILIEQGVTAREIE) serves as a coordination point for ATP. The Mg(2+) site is built by Asp288, Glu301, and Asn303.

It belongs to the D-alanine--D-alanine ligase family. Mg(2+) is required as a cofactor. Requires Mn(2+) as cofactor.

It localises to the cytoplasm. It catalyses the reaction 2 D-alanine + ATP = D-alanyl-D-alanine + ADP + phosphate + H(+). It functions in the pathway cell wall biogenesis; peptidoglycan biosynthesis. Functionally, cell wall formation. This chain is D-alanine--D-alanine ligase, found in Streptococcus agalactiae serotype Ia (strain ATCC 27591 / A909 / CDC SS700).